The sequence spans 264 residues: Thiazole synthase (264 aa).

The active-site Schiff-base intermediate with DXP is lysine 106. Residues glycine 167, 193–194 (AG), and 215–216 (NT) contribute to the 1-deoxy-D-xylulose 5-phosphate site.

This sequence belongs to the ThiG family. In terms of assembly, homotetramer. Forms heterodimers with either ThiH or ThiS.

The protein localises to the cytoplasm. It catalyses the reaction [ThiS sulfur-carrier protein]-C-terminal-Gly-aminoethanethioate + 2-iminoacetate + 1-deoxy-D-xylulose 5-phosphate = [ThiS sulfur-carrier protein]-C-terminal Gly-Gly + 2-[(2R,5Z)-2-carboxy-4-methylthiazol-5(2H)-ylidene]ethyl phosphate + 2 H2O + H(+). Its pathway is cofactor biosynthesis; thiamine diphosphate biosynthesis. Its function is as follows. Catalyzes the rearrangement of 1-deoxy-D-xylulose 5-phosphate (DXP) to produce the thiazole phosphate moiety of thiamine. Sulfur is provided by the thiocarboxylate moiety of the carrier protein ThiS. In vitro, sulfur can be provided by H(2)S. This chain is Thiazole synthase, found in Xanthomonas campestris pv. campestris (strain 8004).